The following is a 1024-amino-acid chain: P3N-PIPO polyprotein (1024 aa).

In terms of domain architecture, Peptidase S30 spans 165–308 (RMSEASLQLF…KKQSNEIIHY (144 aa)). Residues His216, Asp225, and Ser259 each act as for P1 proteinase activity in the active site. An Involved in interaction with stylet and aphid transmission motif is present at residues 360-363 (KITC). The short motif at 619 to 621 (PTK) is the Involved in virions binding and aphid transmission element. In terms of domain architecture, Peptidase C6 spans 645–767 (MFIAKAGYCY…DSNMKTYLVG (123 aa)). Catalysis depends on for helper component proteinase activity residues Cys653 and His726.

This sequence belongs to the potyviridae P3N-PIPO polyprotein family. Interacts (via PIPO domain) with host PCaP1 protein; this interaction may help to anchor the movement complex to the plasma membrane from which the complex could move to the plasmodesmata. In terms of processing, potyviral RNA is expressed as two polyproteins which undergo post-translational proteolytic processing. Genome polyprotein is processed by NIa-pro, P1 and HC-pro proteinases resulting in the production of at least ten individual proteins. P3N-PIPO is cleaved by P1 and HC-pro proteinases resulting in the production of three individual proteins. The P1 proteinase and the HC-pro cleave only their respective C-termini autocatalytically.

The protein localises to the host cell junction. It is found in the host plasmodesma. The enzyme catalyses Hydrolyzes a Gly-|-Gly bond at its own C-terminus, commonly in the sequence -Tyr-Xaa-Val-Gly-|-Gly, in the processing of the potyviral polyprotein.. In terms of biological role, required for aphid transmission and also has proteolytic activity. Only cleaves a Gly-Gly dipeptide at its own C-terminus. Interacts with virions and aphid stylets. Acts as a suppressor of RNA-mediated gene silencing, also known as post-transcriptional gene silencing (PTGS), a mechanism of plant viral defense that limits the accumulation of viral RNAs. May have RNA-binding activity. Allows efficient cell to cell propagation, by bypassing the host cell wall barrier. Transports viral genome to neighboring plant cells directly through plasmosdesmata, without any budding. The sequence is that of P3N-PIPO polyprotein from Plum pox potyvirus (strain D) (PPV).